The chain runs to 379 residues: UDP-4-amino-4-deoxy-L-arabinose--oxoglutarate aminotransferase (379 aa).

Lysine 182 carries the post-translational modification N6-(pyridoxal phosphate)lysine.

It belongs to the DegT/DnrJ/EryC1 family. ArnB subfamily. In terms of assembly, homodimer. Pyridoxal 5'-phosphate is required as a cofactor.

It catalyses the reaction UDP-4-amino-4-deoxy-beta-L-arabinose + 2-oxoglutarate = UDP-beta-L-threo-pentopyranos-4-ulose + L-glutamate. It functions in the pathway nucleotide-sugar biosynthesis; UDP-4-deoxy-4-formamido-beta-L-arabinose biosynthesis; UDP-4-deoxy-4-formamido-beta-L-arabinose from UDP-alpha-D-glucuronate: step 2/3. The protein operates within bacterial outer membrane biogenesis; lipopolysaccharide biosynthesis. Its function is as follows. Catalyzes the conversion of UDP-4-keto-arabinose (UDP-Ara4O) to UDP-4-amino-4-deoxy-L-arabinose (UDP-L-Ara4N). The modified arabinose is attached to lipid A and is required for resistance to polymyxin and cationic antimicrobial peptides. In Escherichia coli O1:K1 / APEC, this protein is UDP-4-amino-4-deoxy-L-arabinose--oxoglutarate aminotransferase.